Here is a 477-residue protein sequence, read N- to C-terminus: MAGTTQGAKTLYDKLWDDHLVSQRDDGSCLIYIDRHLLHEVTSPQAFEGLQLAGRQPWRLNANIATPDHNVPTSKKEREQGIAGIEDDTSRIQVQTLDDNCKTFNIVEFGINDIRQGIVHVVGPEQGLTLPGMTVVCGDSHTATHGAFGCLAHGIGTSEVEHVLATQCLIQKKSKNMLIRVDGQLGKGVTPKDVVLAIIGKIGTAGGTGYAIEFGGQVFRDMSIEGRMTVCNMAIEAGARVGMVAVDDKTIEYVQSRHYAPKGEQWDQAVAYWNTLHSDDDAVFDEVVVLNGAEIEPQVSWGTSPEMVIPVSQAVPTLEQAKDDVQRNDWTRAYQYMGLTAGQALADIQLDRVFIGSCTNSRIEDIRAAAEVVKGRKVASSIKQAMIVPGSGLVKQQAEQEGLDQVFLEAGFEWREPGCSMCLAMNSDKLQPGEHCASTSNRNFEGRQGNGGRTHLVSPAMAAAAAIAGHFVDVRSF.

Residues Cys-358, Cys-419, and Cys-422 each contribute to the [4Fe-4S] cluster site.

Belongs to the aconitase/IPM isomerase family. LeuC type 1 subfamily. Heterodimer of LeuC and LeuD. It depends on [4Fe-4S] cluster as a cofactor.

It catalyses the reaction (2R,3S)-3-isopropylmalate = (2S)-2-isopropylmalate. It participates in amino-acid biosynthesis; L-leucine biosynthesis; L-leucine from 3-methyl-2-oxobutanoate: step 2/4. Its function is as follows. Catalyzes the isomerization between 2-isopropylmalate and 3-isopropylmalate, via the formation of 2-isopropylmaleate. This Acinetobacter baylyi (strain ATCC 33305 / BD413 / ADP1) protein is 3-isopropylmalate dehydratase large subunit.